We begin with the raw amino-acid sequence, 288 residues long: MAAKIIDGKTIAQQVRSEVAEKVKARVAAGKRAPGLAVVLVGSNPASQIYVGSKRKACEEVGFVSRSYDLPETTSEAELLELIDTLNADKTIDGILVQLPLPAGIDNVKVLERIAPDKDVDGFHPYNVGRLCQRAPRLRPCTPRGIVTLLERYNIDTYGLNAVVIGASNIVGRPMSMELLLAGCTTTVTHRFTKNLRHHVENADLLIVAVGKPGFIPGEWIKEGAIVVDVGINRLESGKVVGDVVYEDAAERASYITPVPGGVGPMTVATLIQNTLQACEEYHDVEEA.

Residues 166–168 (GAS) and Ile-232 each bind NADP(+).

This sequence belongs to the tetrahydrofolate dehydrogenase/cyclohydrolase family. As to quaternary structure, homodimer.

The catalysed reaction is (6R)-5,10-methylene-5,6,7,8-tetrahydrofolate + NADP(+) = (6R)-5,10-methenyltetrahydrofolate + NADPH. The enzyme catalyses (6R)-5,10-methenyltetrahydrofolate + H2O = (6R)-10-formyltetrahydrofolate + H(+). It participates in one-carbon metabolism; tetrahydrofolate interconversion. Catalyzes the oxidation of 5,10-methylenetetrahydrofolate to 5,10-methenyltetrahydrofolate and then the hydrolysis of 5,10-methenyltetrahydrofolate to 10-formyltetrahydrofolate. This Klebsiella pneumoniae (strain 342) protein is Bifunctional protein FolD.